The chain runs to 728 residues: MYYSEEIGLPKTDISRWRLRSDALGRETWHYLSQSECESEPQSTFVQWLLESPDFPSPPSSDIHTPDEAARKGADFLKLLQLDNGIFPCQYKGPMFMTIGYVTANYYSKTEIPEPYRVEMIRYIVNTAHPVDGGWGLHSVDKSTCFGTTMNYVCLRLLGMEKDHPVLVKARKTLHRLGGAIKNPHWGKAWLSILNLYEWEGVNPAPPELWRLPYWLPIHPAKWWVHTRAIYLPLGYTSANRVQCELDPLLKEIRNEIYVPSQLPYESIKFGNQRNNVCGVDLYYPHTKILDFANSILSKWEAVRPKWLLNWVNKKVYDLIVKEYQNTEYLCIAPVSFAFNMVVTCHYEGSESENFKKLQNRMNDVLFHGPQGMTVMGTNGVQVWDAAFMVQYFFMTGLVDDPKYHDMIRKSYLFLVRSQFTENCVDGSFRDRRKGAWPFSTKEQGYTVSDCTAEAMKAIIMVRNHASFADIRDEIKDENLFDAVEVLLQIQNVGEWEYGSFSTYEGIKAPLLLEKLNPAEVFNNIMVEYPYVECTDSSVLGLTYFAKYYPDYKPELIQKTISSAIQYILDSQDNIDGSWYGCWGICYTYASMFALEALHTVGLDYESSSAVKKGCDFLISKQLPDGGWSESMKGCETHSYVNGENSLVVQSAWALIGLILGNYPDEEPIKRGIQFLMKRQLPTGEWKYEDIEGVFNHSCAIEYPSYRFLFPIKALGLYKNKYGDKVLV.

A PFTB 1 repeat occupies 117–159 (RVEMIRYIVNTAHPVDGGWGLHSVDKSTCFGTTMNYVCLRLLG). Aspartate 450 functions as the Proton donor in the catalytic mechanism. PFTB repeat units follow at residues 561-602 (ISSA…HTVG) and 611-657 (VKKG…ALIG).

This sequence belongs to the terpene cyclase/mutase family.

The protein resides in the lipid droplet. It is found in the endoplasmic reticulum membrane. The enzyme catalyses (S)-2,3-epoxysqualene = lanosterol. Its pathway is terpene metabolism; lanosterol biosynthesis; lanosterol from farnesyl diphosphate: step 3/3. Functionally, lanosterol synthase; part of the third module of ergosterol biosynthesis pathway that includes the late steps of the pathway. ERG7 catalyzes the cyclization of (S)-2,3 oxidosqualene to lanosterol, a reaction that forms the sterol core. The third module or late pathway involves the ergosterol synthesis itself through consecutive reactions that mainly occur in the endoplasmic reticulum (ER) membrane. Firstly, the squalene synthase ERG9 catalyzes the condensation of 2 farnesyl pyrophosphate moieties to form squalene, which is the precursor of all steroids. Squalene synthase is crucial for balancing the incorporation of farnesyl diphosphate (FPP) into sterol and nonsterol isoprene synthesis. Secondly, the squalene epoxidase ERG1 catalyzes the stereospecific oxidation of squalene to (S)-2,3-epoxysqualene, which is considered to be a rate-limiting enzyme in steroid biosynthesis. Then, the lanosterol synthase ERG7 catalyzes the cyclization of (S)-2,3 oxidosqualene to lanosterol, a reaction that forms the sterol core. In the next steps, lanosterol is transformed to zymosterol through a complex process involving various demethylation, reduction and desaturation reactions. The lanosterol 14-alpha-demethylase ERG11 (also known as CYP51) catalyzes C14-demethylation of lanosterol to produce 4,4'-dimethyl cholesta-8,14,24-triene-3-beta-ol, which is critical for ergosterol biosynthesis. The C-14 reductase ERG24 reduces the C14=C15 double bond of 4,4-dimethyl-cholesta-8,14,24-trienol to produce 4,4-dimethyl-cholesta-8,24-dienol. 4,4-dimethyl-cholesta-8,24-dienol is substrate of the C-4 demethylation complex ERG25-ERG26-ERG27 in which ERG25 catalyzes the three-step monooxygenation required for the demethylation of 4,4-dimethyl and 4alpha-methylsterols, ERG26 catalyzes the oxidative decarboxylation that results in a reduction of the 3-beta-hydroxy group at the C-3 carbon to an oxo group, and ERG27 is responsible for the reduction of the keto group on the C-3. ERG28 has a role as a scaffold to help anchor ERG25, ERG26 and ERG27 to the endoplasmic reticulum and ERG29 regulates the activity of the iron-containing C4-methylsterol oxidase ERG25. Then, the sterol 24-C-methyltransferase ERG6 catalyzes the methyl transfer from S-adenosyl-methionine to the C-24 of zymosterol to form fecosterol. The C-8 sterol isomerase ERG2 catalyzes the reaction which results in unsaturation at C-7 in the B ring of sterols and thus converts fecosterol to episterol. The sterol-C5-desaturase ERG3 then catalyzes the introduction of a C-5 double bond in the B ring to produce 5-dehydroepisterol. The C-22 sterol desaturase ERG5 further converts 5-dehydroepisterol into ergosta-5,7,22,24(28)-tetraen-3beta-ol by forming the C-22(23) double bond in the sterol side chain. Finally, ergosta-5,7,22,24(28)-tetraen-3beta-ol is substrate of the C-24(28) sterol reductase ERG4 to produce ergosterol. In Candida albicans (strain SC5314 / ATCC MYA-2876) (Yeast), this protein is Lanosterol synthase.